The sequence spans 167 residues: Thioredoxin Y2, chloroplastic (167 aa).

The transit peptide at 1 to 58 (MAISLATAYISPCFTPESSNSASPSRTLSSVRLPSQIRRFGSVQSPSSSTRFAPLTVR) directs the protein to the chloroplast. The Thioredoxin domain occupies 59–164 (AAKKQTFNSF…LVERIENSLQ (106 aa)). Active-site nucleophile residues include Cys88 and Cys91. Residues Cys88 and Cys91 are joined by a disulfide bond.

This sequence belongs to the thioredoxin family. Plant Y-type subfamily. In terms of tissue distribution, expressed in leaves.

The protein localises to the plastid. It is found in the chloroplast stroma. Thiol-disulfide oxidoreductase that poorly activates chloroplastic malate dehydrogenase (NADP-MDH) and fructose-1,6-bisphosphatase. Provides reducing equivalents for peroxiredoxin Q. The chain is Thioredoxin Y2, chloroplastic from Arabidopsis thaliana (Mouse-ear cress).